The chain runs to 102 residues: Large ribosomal subunit protein bL21 (102 aa).

This sequence belongs to the bacterial ribosomal protein bL21 family. Part of the 50S ribosomal subunit. Contacts protein L20.

This protein binds to 23S rRNA in the presence of protein L20. The chain is Large ribosomal subunit protein bL21 from Saccharopolyspora erythraea (strain ATCC 11635 / DSM 40517 / JCM 4748 / NBRC 13426 / NCIMB 8594 / NRRL 2338).